Here is a 1338-residue protein sequence, read N- to C-terminus: MASPPRHGPPGPASGDGPNLNNNNNNNNHSVRKCGYLRKQKHGHKRFFVLRGPGAGGDEATAGGGSAPQPPRLEYYESEKKWRSKAGAPKRVIALDCCLNINKRADAKHKYLIALYTKDEYFAVAAENEQEQEGWYRALTDLVSEGRAAAGDAPPAAAPAASCSASLPGALGGSAGAAGAEDSYGLVAPATAAYREVWQVNLKPKGLGQSKNLTGVYRLCLSARTIGFVKLNCEQPSVTLQLMNIRRCGHSDSFFFIEVGRSAVTGPGELWMQADDSVVAQNIHETILEAMKALKELFEFRPRSKSQSSGSSATHPISVPGARRHHHLVNLPPSQTGLVRRSRTDSLAATPPAAKCSSCRVRTASEGDGGAAAGAAAAGARPVSVAGSPLSPGPVRAPLSRSHTLSGGCGGRGSKVALLPAGGALQHSRSMSMPVAHSPPAATSPGSLSSSSGHGSGSYPPPPGPHPPLPHPLHHGPGQRPSSGSASASGSPSDPGFMSLDEYGSSPGDLRAFCSHRSNTPESIAETPPARDGGGGGEFYGYMTMDRPLSHCGRSYRRVSGDAAQDLDRGLRKRTYSLTTPARQRPVPQPSSASLDEYTLMRATFSGSAGRLCPSCPASSPKVAYHPYPEDYGDIEIGSHRSSSSNLGADDGYMPMTPGAALAGSGSGSCRSDDYMPMSPASVSAPKQILQPRAAAAAAAAVPSAGPAGPAPTSAAGRTFPASGGGYKASSPAESSPEDSGYMRMWCGSKLSMEHADGKLLPNGDYLNVSPSDAVTTGTPPDFFSAALHPGGEPLRGVPGCCYSSLPRSYKAPYTCGGDSDQYVLMSSPVGRILEEERLEPQATPGPSQAASAFGAGPTQPPHPVVPSPVRPSGGRPEGFLGQRGRAVRPTRLSLEGLPSLPSMHEYPLPPEPKSPGEYINIDFGEPGARLSPPAPPLLASAASSSSLLSASSPASSLGSGTPGTSSDSRQRSPLSDYMNLDFSSPKSPKPGAPSGHPVGSLDGLLSPEASSPYPPLPPRPSASPSSSLQPPPPPPAPGELYRLPPASAVATAQGPGAASSLSSDTGDNGDYTEMAFGVAATPPQPIAAPPKPEAARVASPTSGVKRLSLMEQVSGVEAFLQASQPPDPHRGAKVIRADPQGGRRRHSSETFSSTTTVTPVSPSFAHNPKRHNSASVENVSLRKSSEGGVGVGPGGGDEPPTSPRQLQPAPPLAPQGRPWTPGQPGGLVGCPGSGGSPMRRETSAGFQNGLNYIAIDVREEPGLPPQPQPPPPPLPQPGDKSSWGRTRSLGGLISAVGVGSTGGGCGGPGPGALPPANTYASIDFLSHHLKEATIVKE.

The segment covering 1-12 (MASPPRHGPPGP) has biased composition (pro residues). Disordered stretches follow at residues 1–31 (MASP…NHSV) and 49–72 (VLRG…QPPR). The PH domain occupies 16-144 (DGPNLNNNNN…WYRALTDLVS (129 aa)). The span at 19–28 (NLNNNNNNNN) shows a compositional bias: low complexity. Over residues 53–66 (PGAGGDEATAGGGS) the composition is skewed to gly residues. The 105-residue stretch at 194-298 (YREVWQVNLK…EAMKALKELF (105 aa)) folds into the IRS-type PTB domain. Residues 303–411 (RSKSQSSGSS…SHTLSGGCGG (109 aa)) are disordered. Residues Ser-306 and Ser-346 each carry the phosphoserine modification. Thr-350 carries the phosphothreonine modification. Residues Ser-365, Ser-384, Ser-388, and Ser-391 each carry the phosphoserine modification. An Omega-N-methylarginine modification is found at Arg-412. The interval 428–537 (SRSMSMPVAH…PPARDGGGGG (110 aa)) is disordered. Residues 444–453 (SPGSLSSSSG) show a composition bias toward low complexity. Residues 459–471 (YPPPPGPHPPLPH) are compositionally biased toward pro residues. Low complexity predominate over residues 475 to 493 (HGPGQRPSSGSASASGSPS). Thr-520 is subject to Phosphothreonine. Phosphoserine is present on Ser-523. At Thr-527 the chain carries Phosphothreonine. Tyr-540 is modified (phosphotyrosine; by INSR). A YXXM motif 1 motif is present at residues 540–543 (YGYM). Phosphoserine; by PLK1 is present on Ser-560. Ser-577 carries the post-translational modification Phosphoserine. 2 positions are modified to phosphothreonine: Thr-579 and Thr-580. Ser-594 is modified (phosphoserine). A YXXM motif 2 motif is present at residues 598–601 (YTLM). Phosphoserine is present on residues Ser-608 and Ser-620. Phosphotyrosine; by INSR is present on residues Tyr-653 and Tyr-675. 2 consecutive short sequence motifs (YXXM motif) follow at residues 653-656 (YMPM) and 675-678 (YMPM). Phosphoserine occurs at positions 679 and 682. The segment covering 703-719 (PSAGPAGPAPTSAAGRT) has biased composition (low complexity). Positions 703 to 739 (PSAGPAGPAPTSAAGRTFPASGGGYKASSPAESSPED) are disordered. Phosphoserine is present on residues Ser-735 and Ser-736. The YXXM motif 5 signature appears at 742-745 (YMRM). Ser-770 carries the post-translational modification Phosphoserine. Thr-779 is modified (phosphothreonine). Ser-805 is modified (phosphoserine). Residues 823–826 (YVLM) carry the YXXM motif 6 motif. A Phosphoserine modification is found at Ser-828. The interval 840–1101 (EPQATPGPSQ…KPEAARVASP (262 aa)) is disordered. The segment covering 859 to 870 (TQPPHPVVPSPV) has biased composition (pro residues). At Ser-915 the chain carries Phosphoserine. At Tyr-919 the chain carries Phosphotyrosine; by INSR. A compositionally biased stretch (low complexity) spans 938 to 967 (LLASAASSSSLLSASSPASSLGSGTPGTSS). Ser-973 carries the post-translational modification Phosphoserine. A Phosphotyrosine; by INSR modification is found at Tyr-978. Pro residues predominate over residues 1013 to 1022 (PYPPLPPRPS). Residues 1072 to 1075 (YTEM) carry the YXXM motif 7 motif. Position 1082 is a phosphothreonine (Thr-1082). Residues 1083–1093 (PPQPIAAPPKP) show a composition bias toward pro residues. At Ser-1100 the chain carries Phosphoserine. Ser-1109 carries the phosphoserine; by PLK1 modification. Residues 1121-1296 (LQASQPPDPH…TRSLGGLISA (176 aa)) form a disordered region. Residues 1150-1165 (ETFSSTTTVTPVSPSF) show a composition bias toward low complexity. A Phosphothreonine modification is found at Thr-1159. Residues Ser-1162, Ser-1174, Ser-1176, and Ser-1186 each carry the phosphoserine modification. Residues 1174-1183 (SASVENVSLR) show a composition bias toward polar residues. Gly residues predominate over residues 1188 to 1198 (GGVGVGPGGGD). A Phosphoserine modification is found at Ser-1203. A compositionally biased stretch (gly residues) spans 1224 to 1236 (QPGGLVGCPGSGG). Phosphotyrosine; by INSR is present on Tyr-1253. Residues 1263–1277 (GLPPQPQPPPPPLPQ) are compositionally biased toward pro residues. A Glycyl lysine isopeptide (Lys-Gly) (interchain with G-Cter in ubiquitin) cross-link involves residue Lys-1331.

Interacts with PHIP. Interacts with SH2B1; this interaction enhances leptin-induced activation of the PI3-kinase pathway. Interacts with GRB2. Interacts with PIK3R1. Interacts with DVL2; this interaction promotes the Wnt/beta-catenin signaling pathway. In terms of processing, phosphorylation fluctuates in a cell-cycle dependent manner with hyperphosphorylation during mitosis. Phosphorylated at Ser-560 and Ser-1109 by PLK1; these phosphorylations prevent the activation of the PI3K pathway upon growth factor stimulation by inhibiting the binding between IRS2 and the PI3K pathway components and increasing the level of IRS2 protein degradation. In addition, they prevent premature mitotic exit. Post-translationally, monoubiquitinated by NEDD4; leading to enhanced IGF1 signaling. During cell cycle, ubiquitination and proteasomal degradation are controlled by FZR1.

It is found in the cytoplasm. Its subcellular location is the cytosol. Its function is as follows. Signaling adapter protein that participates in the signal transduction from two prominent receptor tyrosine kinases, insulin receptor/INSR and insulin-like growth factor I receptor/IGF1R. Plays therefore an important role in development, growth, glucose homeostasis as well as lipid metabolism. Upon phosphorylation by the insulin receptor, functions as a signaling scaffold that propagates insulin action through binding to SH2 domain-containing proteins including the p85 regulatory subunit of PI3K, NCK1, NCK2, GRB2 or SHP2. Recruitment of GRB2 leads to the activation of the guanine nucleotide exchange factor SOS1 which in turn triggers the Ras/Raf/MEK/MAPK signaling cascade. Activation of the PI3K/AKT pathway is responsible for most of insulin metabolic effects in the cell, and the Ras/Raf/MEK/MAPK is involved in the regulation of gene expression and in cooperation with the PI3K pathway regulates cell growth and differentiation. Acts a positive regulator of the Wnt/beta-catenin signaling pathway through suppression of DVL2 autophagy-mediated degradation leading to cell proliferation. Plays a role in cell cycle progression by promoting a robust spindle assembly checkpoint (SAC) during M-phase. In macrophages, IL4-induced tyrosine phosphorylation of IRS2 leads to the recruitment and activation of phosphoinositide 3-kinase (PI3K). The polypeptide is Insulin receptor substrate 2 (IRS2) (Homo sapiens (Human)).